Reading from the N-terminus, the 578-residue chain is Dystrotelin (578 aa).

A ZZ-type zinc finger spans residues 223–279 (THPARCTLCRTFPITGLRYRCLKCLNFDICQMCFLSGLHSKSHQKSHPVIEHCIQMS). 8 residues coordinate Zn(2+): C228, C231, C243, C246, C252, C255, H265, and H269. Residues 322 to 351 (HHAQARLLKKQLNQYKDKLQAIYTSQEERI) adopt a coiled-coil conformation. Positions 382 to 475 (RLQPPGPSSS…QSQTQKMPQK (94 aa)) are disordered. 2 stretches are compositionally biased toward basic and acidic residues: residues 399–410 (KVDHSSTEKVPK) and 431–451 (PKLD…HALR). Polar residues predominate over residues 455-472 (SPETTLHSTRAQSQTQKM). A coiled-coil region spans residues 503–537 (ALAAVEKKEAGNIKERKDELEEEELQELLSKLMDA).

The protein resides in the cell membrane. The sequence is that of Dystrotelin (DYTN) from Homo sapiens (Human).